Reading from the N-terminus, the 306-residue chain is LysM and putative peptidoglycan-binding domain-containing protein 3 (306 aa).

Residues methionine 1 to glycine 217 are Extracellular-facing. Asparagine 7 carries an N-linked (GlcNAc...) asparagine glycan. Serine 55 carries the post-translational modification Phosphoserine. The region spanning leucine 65–isoleucine 109 is the LysM domain. The helical transmembrane segment at tryptophan 218–leucine 238 threads the bilayer. The Cytoplasmic segment spans residues tyrosine 239–threonine 306.

Its subcellular location is the cell membrane. The protein resides in the golgi apparatus. In terms of biological role, essential for Golgi structural integrity. This is LysM and putative peptidoglycan-binding domain-containing protein 3 (LYSMD3) from Homo sapiens (Human).